The chain runs to 591 residues: MAFTFPPSYRTLVGLYYIFTLMHTAVSTPPDDPVKCVSGNTNCTVTNSYGAFPDRSTCRAANVAYPKTEAELVSVVAAATQAGRKMRVTTRYSHSITKLVCTDGTEGLFISTKFLNHTVQADATAMTMTVESGMTLRQLIVEAAKVGLALPYAPYWWGLTVGGMMGTGAHGSSLWGKGSAVHDYVTEIRMVSPGSVNEGFAKIRILSETTTPNEFNAAKVSLGVLGVISQVTFELQPMFKRSLTYTMRNDSDFEDQAVTFGKKHEFADFIWLPSQGKVVYRRDDRVAVNTSGNGLFDFLPFRSQLSAAIAIIRTSEETQERFRDANGKCVGATIISSTLFAPSYGLTNNGIIFTGYPVVGSQNRMMSSGSCLDSLQDGLITACAWDSRIKGEFFHQTTLSVPLTQVKSFISDIKSLVKIEQKSLCGLELHYGILMRYVTSSPAYLGKETEALDFDITYYRAKDPLTPRLYEDFIEEIEQIALFKYNALPHWGKNRNLAFDGVIRKYNNAPAFLKVKDSYDPKGLFSSEWTDQILGIKGNASIVKDGCALEGLCICSKDAHCAPAKGYLCRPGKVYKEARVCTRVDGIISVI.

The N-terminal stretch at 1–27 is a signal peptide; it reads MAFTFPPSYRTLVGLYYIFTLMHTAVS. One can recognise an FAD-binding PCMH-type domain in the interval 56-238; sequence STCRAANVAY…SQVTFELQPM (183 aa).

Belongs to the oxygen-dependent FAD-linked oxidoreductase family. FAD serves as cofactor.

The catalysed reaction is L-gulono-1,4-lactone + O2 = L-ascorbate + H2O2 + H(+). It functions in the pathway cofactor biosynthesis; L-ascorbate biosynthesis. Functionally, catalyzes the oxidation of L-gulono-1,4-lactone to ascorbic acid. L-gulono-1,4-lactone is oxidized to hydrogen peroxide and L-xylo-hexulonolactone which spontaneously isomerizes to L-ascorbate. The chain is L-gulonolactone oxidase 2 from Arabidopsis thaliana (Mouse-ear cress).